The sequence spans 216 residues: Glutathione S-transferase 1, isoform B (216 aa).

The 80-residue stretch at 1-80 (MDFYYLPGSA…YLVEKYGKPC (80 aa)) folds into the GST N-terminal domain. Residues Ser9, 50–52 (HCV), and 64–66 (ESR) each bind glutathione. Residues 89–210 (DPQKRAIVNQ…RSWAEAARPF (122 aa)) enclose the GST C-terminal domain.

Belongs to the GST superfamily. Theta family. Homodimer.

It catalyses the reaction RX + glutathione = an S-substituted glutathione + a halide anion + H(+). Functionally, conjugation of reduced glutathione to a wide number of exogenous and endogenous hydrophobic electrophiles. The polypeptide is Glutathione S-transferase 1, isoform B (Anopheles gambiae (African malaria mosquito)).